A 523-amino-acid polypeptide reads, in one-letter code: MGKPTSSGCDWRRFLRNHWLLLSTVAAVVLGIVLGVVVRGHSELSNLDKFYFAFPGEILMRMLKLVILPLIVSSMITGVAALDSNVSGKIGLRAVVYYFSTTVIAVILGIVLVVSIKPGVTQKVNDINRTGKTPEVSTMDAMLDLIRNMFPENLVQACFQQYKTKREEVKPVGDPGGNATEVSVTTAMTTMSENKTKEYKIVGLYSDGINVLGLIIFCLVFGLVIGKMGEKGQILVDFFNALSDATMKIVQIIMCYMPIGILFLIAGKIIEVEDWEIFRKLGLYMATVLSGLAIHSLIVLPLLYFIVVRKNPFRFALGMAQALLTALMISSSSATLPVTFRCAEEKNQVDKRITRFVLPVGATINMDGTALYEAVAAVFIAQLNGLDLSIGQIVTISITATAASIGAAGVPQAGLVTMVIVLSAVGLPAEDVTLIIAVDWLLDRFRTMVNVLGDAFGTGIVEKLSKKELEQMDVSSEVNIVNPFALEPTTLDNEDSDTKKSYVNGGFAVDKSDTISFTQTSQF.

Residues 1-18 (MGKPTSSGCDWRRFLRNH) lie on the Cytoplasmic side of the membrane. The helical transmembrane segment at 19-38 (WLLLSTVAAVVLGIVLGVVV) threads the bilayer. Residues 39-61 (RGHSELSNLDKFYFAFPGEILMR) lie on the Extracellular side of the membrane. A helical transmembrane segment spans residues 62–82 (MLKLVILPLIVSSMITGVAAL). Over 83–93 (DSNVSGKIGLR) the chain is Cytoplasmic. A helical membrane pass occupies residues 94 to 114 (AVVYYFSTTVIAVILGIVLVV). Na(+) contacts are provided by Tyr98, Thr101, and Thr102. The Extracellular portion of the chain corresponds to 115-204 (SIKPGVTQKV…KTKEYKIVGL (90 aa)). Asn128, Asn178, and Asn194 each carry an N-linked (GlcNAc...) asparagine glycan. The chain crosses the membrane as a helical span at residues 205–228 (YSDGINVLGLIIFCLVFGLVIGKM). The Cytoplasmic portion of the chain corresponds to 229 to 237 (GEKGQILVD). A helical membrane pass occupies residues 238–265 (FFNALSDATMKIVQIIMCYMPIGILFLI). At 266-285 (AGKIIEVEDWEIFRKLGLYM) the chain is on the extracellular side. Residues 286 to 307 (ATVLSGLAIHSLIVLPLLYFIV) form a helical membrane-spanning segment. Residues 308–312 (VRKNP) lie on the Cytoplasmic side of the membrane. The segment at residues 313 to 343 (FRFALGMAQALLTALMISSSSATLPVTFRCA) is an intramembrane region (discontinuously helical). Ser330 and Ser332 together coordinate L-aspartate. Residues 344 to 352 (EEKNQVDKR) lie on the Cytoplasmic side of the membrane. Residues 353 to 379 (ITRFVLPVGATINMDGTALYEAVAAVF) traverse the membrane as a helical segment. Na(+)-binding residues include Gly361, Thr363, Asn365, and Asp367. Thr369 serves as a coordination point for L-aspartate. Over 380-392 (IAQLNGLDLSIGQ) the chain is Extracellular. An intramembrane region (discontinuously helical) is located at residues 393-426 (IVTISITATAASIGAAGVPQAGLVTMVIVLSAVG). Na(+) is bound by residues Ser404, Ile405, and Ala407. Val410 is an L-aspartate binding site. At 427-439 (LPAEDVTLIIAVD) the chain is on the extracellular side. Residues 440–461 (WLLDRFRTMVNVLGDAFGTGIV) form a helical membrane-spanning segment. Arg446, Thr447, and Asn450 together coordinate L-aspartate. Residues Asn450 and Asp454 each contribute to the Na(+) site. Topologically, residues 462–523 (EKLSKKELEQ…TISFTQTSQF (62 aa)) are cytoplasmic. Phosphoserine occurs at positions 516 and 521.

This sequence belongs to the dicarboxylate/amino acid:cation symporter (DAACS) (TC 2.A.23) family. SLC1A1 subfamily. As to quaternary structure, homotrimer. Interacts with ARL6IP5. Interacts with RTN2 (via N-terminus); the interaction promotes cell surface expression of SLC1A1. Interacts with SORCS2; this interaction is important for normal expression at the cell membrane. Detected on neurons in the brain cortex, dentate gyrus and hippocampus CA2 region (at protein level). Expressed in whole brain, brain cortex, hippocampus, cerebellum, lung, kidney, small intestine and skeletal muscle. Expressed in the renal outer medulla, medullary ray and cortex (at protein level).

The protein resides in the cell membrane. It is found in the apical cell membrane. Its subcellular location is the synapse. It localises to the synaptosome. The protein localises to the early endosome membrane. The protein resides in the late endosome membrane. It is found in the recycling endosome membrane. It catalyses the reaction K(+)(in) + L-glutamate(out) + 3 Na(+)(out) + H(+)(out) = K(+)(out) + L-glutamate(in) + 3 Na(+)(in) + H(+)(in). The enzyme catalyses K(+)(in) + L-aspartate(out) + 3 Na(+)(out) + H(+)(out) = K(+)(out) + L-aspartate(in) + 3 Na(+)(in) + H(+)(in). The catalysed reaction is D-aspartate(out) + K(+)(in) + 3 Na(+)(out) + H(+)(out) = D-aspartate(in) + K(+)(out) + 3 Na(+)(in) + H(+)(in). It carries out the reaction K(+)(in) + L-cysteine(out) + 3 Na(+)(out) + H(+)(out) = K(+)(out) + L-cysteine(in) + 3 Na(+)(in) + H(+)(in). Sodium-dependent, high-affinity amino acid transporter that mediates the uptake of L-glutamate and also L-aspartate and D-aspartate. Can also transport L-cysteine. Functions as a symporter that transports one amino acid molecule together with two or three Na(+) ions and one proton, in parallel with the counter-transport of one K(+) ion. Mediates Cl(-) flux that is not coupled to amino acid transport; this avoids the accumulation of negative charges due to aspartate and Na(+) symport. Plays an important role in L-glutamate and L-aspartate reabsorption in renal tubuli. Plays a redundant role in the rapid removal of released glutamate from the synaptic cleft, which is essential for terminating the postsynaptic action of glutamate. Contributes to glutathione biosynthesis and protection against oxidative stress via its role in L-glutamate and L-cysteine transport. Negatively regulated by ARL6IP5. This chain is Excitatory amino acid transporter 3 (Slc1a1), found in Mus musculus (Mouse).